The chain runs to 217 residues: LSM12 homolog A (217 aa).

Residues 9-78 (VNAVNDCFSI…CSNVQVIKEC (70 aa)) form the Sm domain. In terms of domain architecture, AD spans 86-184 (QKLNLEQVKM…IIKQFFNTRP (99 aa)). Residues 185–217 (SPVPESGAAASTSSPSVSPTSSSLASGSPVPAN) form a disordered region. Residues 190–217 (SGAAASTSSPSVSPTSSSLASGSPVPAN) show a composition bias toward low complexity.

This sequence belongs to the LSM12 family. As to quaternary structure, component of the Atx2-tyf activator complex, composed of Atx2, tyf, pAbp, Lsm12a. Interacts with tyf, Atx2 and pAbp.

In terms of biological role, component of the Atx2-tyf activator complex which functions in the circadian pacemaker neurons to activate the TYF-dependent translation of per and maintain 24 hour periodicity in circadian behaviors. Within the Atx2-tyf complex, likely to function as a molecular adapter which stabilizes the interaction between Atx2 and the translational regulator tyf. This is LSM12 homolog A from Drosophila melanogaster (Fruit fly).